Reading from the N-terminus, the 421-residue chain is MNRGFSRKSHTFLPKIFFRKMSSSGTKDKPELQFPFLQDEDTVATLQECKTLFILRGLPGSGKSTLARVIVDKYRDGTKMVSADAYKITPGARGAFSEEYKRLDEDLAAYCRRRDIRILVLDDTNHERERLEQLFEMADQYQYQVVLVEPKTAWRLGCAQLKEKNQWQLSADDLKKLKPGLEKDFLPLYFGWFLTKKSSETLRKAGQVFLEELGNHKAFKKELRQFIPGDEPREKMDLVTYFGKRPPGVLHCTTKFCDYGKAPGAEEYAQQDVLKKSYSKAFTLTISALFVTPKTTGARVELSEQQLQLWPSDVDKLSPTDNLPRGSRAHITLGCAADVEAVQTGLDLLEILRQEKGGSRGEEVGELSRGKLYSLGNGRWMLTLAKNMEVRAIFTGYYGKGKPVPTQGSRKGGALQSCTII.

Phosphoserine occurs at positions 6 and 9. Y110 is subject to Phosphotyrosine. Phosphoserine is present on S170. Catalysis depends on H251, which acts as the Proton acceptor. A substrate-binding site is contributed by T253. Residue H330 is the Proton donor of the active site. T332 lines the substrate pocket. S359 is modified (phosphoserine). C418 carries the cysteine methyl ester modification. C418 is lipidated: S-farnesyl cysteine. Positions 419–421 are cleaved as a propeptide — removed in mature form; it reads TII.

The protein belongs to the 2H phosphoesterase superfamily. CNPase family. Exists as monomers and homodimers.

The protein resides in the membrane. Its subcellular location is the melanosome. It carries out the reaction a nucleoside 2',3'-cyclic phosphate + H2O = a nucleoside 2'-phosphate + H(+). Functionally, catalyzes the formation of 2'-nucleotide products from 2',3'-cyclic substrates. May participate in RNA metabolism in the myelinating cell, CNP is the third most abundant protein in central nervous system myelin. In Pongo abelii (Sumatran orangutan), this protein is 2',3'-cyclic-nucleotide 3'-phosphodiesterase.